Here is a 504-residue protein sequence, read N- to C-terminus: Galactan beta-1,4-galactosyltransferase GALS3 (504 aa).

Residues 30 to 50 (LTFMALLVLCTLATLLPFIPS) traverse the membrane as a helical segment. Residues 242–456 (DYLYCGSSLY…YHGSISQRRE (215 aa)) enclose the GT92 domain.

It belongs to the glycosyltransferase 92 family. In terms of tissue distribution, expressed in root caps, mature leaves, top of the stems and seeds.

Its subcellular location is the golgi apparatus membrane. Functionally, involved in the biosynthesis of beta-1,4-galactan. Beta-1,4-galactans are abundant polysaccharides in plant cell walls and are found as side-chain of rhamnogalacturonan I, which is a major component of pectin. This Arabidopsis thaliana (Mouse-ear cress) protein is Galactan beta-1,4-galactosyltransferase GALS3.